The following is a 385-amino-acid chain: 3-dehydroquinate synthase (385 aa).

NAD(+) is bound by residues 122 to 126, 146 to 147, K159, and K168; these read GVIGD and TT. Zn(2+) contacts are provided by E201, H264, and H282.

This sequence belongs to the sugar phosphate cyclases superfamily. Dehydroquinate synthase family. The cofactor is Co(2+). It depends on Zn(2+) as a cofactor. Requires NAD(+) as cofactor.

Its subcellular location is the cytoplasm. It carries out the reaction 7-phospho-2-dehydro-3-deoxy-D-arabino-heptonate = 3-dehydroquinate + phosphate. It participates in metabolic intermediate biosynthesis; chorismate biosynthesis; chorismate from D-erythrose 4-phosphate and phosphoenolpyruvate: step 2/7. Catalyzes the conversion of 3-deoxy-D-arabino-heptulosonate 7-phosphate (DAHP) to dehydroquinate (DHQ). This Rhodospirillum rubrum (strain ATCC 11170 / ATH 1.1.1 / DSM 467 / LMG 4362 / NCIMB 8255 / S1) protein is 3-dehydroquinate synthase.